We begin with the raw amino-acid sequence, 272 residues long: Indole-3-glycerol phosphate synthase (272 aa).

The protein belongs to the TrpC family.

The catalysed reaction is 1-(2-carboxyphenylamino)-1-deoxy-D-ribulose 5-phosphate + H(+) = (1S,2R)-1-C-(indol-3-yl)glycerol 3-phosphate + CO2 + H2O. It functions in the pathway amino-acid biosynthesis; L-tryptophan biosynthesis; L-tryptophan from chorismate: step 4/5. The polypeptide is Indole-3-glycerol phosphate synthase (Mycobacterium leprae (strain Br4923)).